The sequence spans 359 residues: MNIYDQLQAVEDRYEELGELLSDPDVVSDTKRFMELSREEANTRETVTAYREYKQVIQTISDAEEMIKDASGDPELEEMAKEELKESKAAKEEYEEKLKILLLPKDPNDDKNIILEIRGAAGGDEAALFAGDLLTMYQKYAETQGWRFEVMESSVNGVGGIKEVVAMVSGQSVYSKLKYESGAHRVQRVPVTESQGRVHTSTATVLVMPEVEEVEYDIDPKDLRVDIYHASGAGGQNVNKVATAVRMVHIPTGIKVEMQEERTQQKNRDKAMKIIRARVADHFAQIAQDEQDAERKSTVGTGDRSERIRTYNFPQNRVTDHRIGLTLQKLDTILSGKMNEVIDALVMYDQTKKLESLNN.

Residue Gln-236 is modified to N5-methylglutamine.

The protein belongs to the prokaryotic/mitochondrial release factor family. In terms of processing, methylated by PrmC. Methylation increases the termination efficiency of RF1.

The protein resides in the cytoplasm. Its function is as follows. Peptide chain release factor 1 directs the termination of translation in response to the peptide chain termination codons UAG and UAA. This Streptococcus pyogenes serotype M6 (strain ATCC BAA-946 / MGAS10394) protein is Peptide chain release factor 1.